Here is a 305-residue protein sequence, read N- to C-terminus: Putative ankyrin repeat protein RF_0580 (305 aa).

ANK repeat units lie at residues 5–34, 39–68, 72–101, 107–136, 140–169, 173–202, and 206–235; these read YNKN…NIDE, RGET…SPNI, SGQT…NIDL, CGHS…DINS, FGAS…DVNA, YEDT…DVNI, and NNFT…TIKI.

This chain is Putative ankyrin repeat protein RF_0580, found in Rickettsia felis (strain ATCC VR-1525 / URRWXCal2) (Rickettsia azadi).